The chain runs to 285 residues: NAD kinase (285 aa).

Asp-66 acts as the Proton acceptor in catalysis. Residues 66–67, 137–138, Arg-148, Arg-165, Asp-167, and 178–183 contribute to the NAD(+) site; these read DG, ND, and TAYSMS.

The protein belongs to the NAD kinase family. It depends on a divalent metal cation as a cofactor.

It is found in the cytoplasm. The enzyme catalyses NAD(+) + ATP = ADP + NADP(+) + H(+). Involved in the regulation of the intracellular balance of NAD and NADP, and is a key enzyme in the biosynthesis of NADP. Catalyzes specifically the phosphorylation on 2'-hydroxyl of the adenosine moiety of NAD to yield NADP. This is NAD kinase from Chlorobium luteolum (strain DSM 273 / BCRC 81028 / 2530) (Pelodictyon luteolum).